The primary structure comprises 359 residues: UDP-2-acetamido-2-deoxy-3-oxo-D-glucuronate aminotransferase (359 aa).

UDP-2-acetamido-2-deoxy-alpha-D-ribo-hex-3-uluronate-binding residues include Gly29, Tyr31, and Ser184. Residue Lys185 is modified to N6-(pyridoxal phosphate)lysine. UDP-2-acetamido-2-deoxy-alpha-D-ribo-hex-3-uluronate is bound by residues Arg229, His308, and Tyr309.

It belongs to the DegT/DnrJ/EryC1 family. Homodimer. The cofactor is pyridoxal 5'-phosphate.

The catalysed reaction is UDP-2-acetamido-2-deoxy-alpha-D-ribo-hex-3-uluronate + L-glutamate = UDP-2-acetamido-3-amino-2,3-dideoxy-alpha-D-glucuronate + 2-oxoglutarate. The protein operates within bacterial outer membrane biogenesis; LPS O-antigen biosynthesis. Functionally, plays a role in the biosynthesis of B-band O antigen for serotype O5. Catalyzes the amination of UDP-2-acetamido-2-deoxy-3-oxo-D-glucuronic acid (UDP-3-oxo-D-GlcNAcA) to UDP-2-acetamido-3-amino-2,3-dideoxy-D-glucuronic acid (UDP-GlcNAc3NA), using L-glutamate as the preferred amine donor. The sequence is that of UDP-2-acetamido-2-deoxy-3-oxo-D-glucuronate aminotransferase from Pseudomonas aeruginosa (strain ATCC 15692 / DSM 22644 / CIP 104116 / JCM 14847 / LMG 12228 / 1C / PRS 101 / PAO1).